The chain runs to 343 residues: Ribosomal RNA small subunit methyltransferase C (343 aa).

It belongs to the methyltransferase superfamily. RsmC family. As to quaternary structure, monomer.

The protein resides in the cytoplasm. It carries out the reaction guanosine(1207) in 16S rRNA + S-adenosyl-L-methionine = N(2)-methylguanosine(1207) in 16S rRNA + S-adenosyl-L-homocysteine + H(+). Functionally, specifically methylates the guanine in position 1207 of 16S rRNA in the 30S particle. This is Ribosomal RNA small subunit methyltransferase C from Escherichia coli (strain 55989 / EAEC).